We begin with the raw amino-acid sequence, 365 residues long: Endophilin-B1 (365 aa).

M1 carries the N-acetylmethionine modification. A membrane-binding amphipathic helix region spans residues M1 to L30. The tract at residues M1 to E37 is required for membrane binding. The region spanning E27–S261 is the BAR domain. T145 is subject to Phosphothreonine; by CDK5. Residues Y155–L195 adopt a coiled-coil conformation. Residues G305 to N365 enclose the SH3 domain.

Belongs to the endophilin family. As to quaternary structure, homodimer, and heterodimer with SH3GLB2. Binds BAX; induction of apoptosis augments BAX binding. Binds DNM1, HTT, AMPH, BIN1 and ARFGAP1. Interacts with UVRAG; UVRAG bridges the interaction to BECN1 indicative for an association with the PI3K complex II (PI3KC3-C2). Post-translationally, phosphorylated at Thr-145 by CDK5; this phosphorylation is required for autophagy induction in starved neurons and facilitates homodimerization.

Its subcellular location is the cytoplasm. It is found in the golgi apparatus membrane. It localises to the mitochondrion outer membrane. The protein resides in the cytoplasmic vesicle. The protein localises to the autophagosome membrane. Its subcellular location is the midbody. Functionally, may be required for normal outer mitochondrial membrane dynamics. Required for coatomer-mediated retrograde transport in certain cells. May recruit other proteins to membranes with high curvature. May promote membrane fusion. Involved in activation of caspase-dependent apoptosis by promoting BAX/BAK1 activation. Involved in caspase-independent apoptosis during nutrition starvation and involved in the regulation of autophagy. Activates lipid kinase activity of PIK3C3 during autophagy probably by associating with the PI3K complex II (PI3KC3-C2). Associated with PI3KC3-C2 during autophagy may regulate the trafficking of ATG9A from the Golgi complex to the peripheral cytoplasm for the formation of autophagosomes by inducing Golgi membrane tubulation and fragmentation. Involved in regulation of degradative endocytic trafficking and cytokinesis, probably in the context of PI3KC3-C2. The chain is Endophilin-B1 (SH3GLB1) from Bos taurus (Bovine).